The following is a 107-amino-acid chain: Thioredoxin (107 aa).

Positions 2–107 (VVHIENLNAF…TLKQKINDHK (106 aa)) constitute a Thioredoxin domain. Catalysis depends on nucleophile residues cysteine 32 and cysteine 35. A disulfide bond links cysteine 32 and cysteine 35. Residues cysteine 71 and cysteine 75 each carry the S-nitrosocysteine modification.

The protein belongs to the thioredoxin family. In terms of processing, may be nitrosylated on several cysteine residues, depending on the oxidation state. Nitrosylated Cys-75 may serve as donor for nitrosylation of target proteins.

It localises to the nucleus. The protein resides in the cytoplasm. Its subcellular location is the secreted. In terms of biological role, participates in various redox reactions through the reversible oxidation of its active center dithiol to a disulfide and catalyzes dithiol-disulfide exchange reactions. Plays a role in the reversible S-nitrosylation of cysteine residues in target proteins, and thereby contributes to the response to intracellular nitric oxide. Nitrosylates the active site Cys of CASP3 in response to nitric oxide (NO), and thereby inhibits caspase-3 activity. Induces the FOS/JUN AP-1 DNA binding activity in ionizing radiation (IR) cells through its oxidation/reduction status and stimulates AP-1 transcriptional activity. This chain is Thioredoxin (txn), found in Ictalurus punctatus (Channel catfish).